Consider the following 573-residue polypeptide: MANTLPPTDRSCDISQPLERLSPDESLKAESDYLRGTIALGLLDRITSAVPGNDIKLMKFHGIYEQDDREIRDERRRQKLEPAFQFMIRVRLPGGICTTERWLKISELACAHGNETLRMTTRQTFQFHWVLKQNIVPLIRGLHEVLLDTVAACGDDSRGVMATVNPQFPALQAELAALAKTVSDHVIPKTRAYHEIWYGEERIASSEPEEPFYGQTYMPRKFKIGFVIPPNNDIDIYAQDLGYIAIIGENGKIAGFNVAIGGGMGRTDKAPHTYPRTASVIGFITPDRLISVTEAVMGVQRDYGNRADRSRARFKYTIDDKGLDWIKLAIEDRAGPLESARPYDFTSNADIYGWIESGDGFHHFTLFIENGRLNRDMLDKIAQIAHVHKGHFRLTPNQNLMIANVATADKPEIEALLRETGLIAFNERSVLRLNSMACVALPTCGLAMADSERYLPDLITKIEGILTRYNLQNEPITLRMTGCPNGCSRPFIAEIGLTGRAPGKYNLYLGGGFHGQRLNRLYRENIGEPAILETLNEVLGRYATERLPDEHFGDFTIRAGIIREVTEGRFSND.

Residues Cys438, Cys444, Cys483, and Cys487 each coordinate [4Fe-4S] cluster. Cys487 is a siroheme binding site.

The protein belongs to the nitrite and sulfite reductase 4Fe-4S domain family. Alpha(8)-beta(8). The alpha component is a flavoprotein, the beta component is a hemoprotein. Requires siroheme as cofactor. [4Fe-4S] cluster serves as cofactor.

The enzyme catalyses hydrogen sulfide + 3 NADP(+) + 3 H2O = sulfite + 3 NADPH + 4 H(+). It participates in sulfur metabolism; hydrogen sulfide biosynthesis; hydrogen sulfide from sulfite (NADPH route): step 1/1. Component of the sulfite reductase complex that catalyzes the 6-electron reduction of sulfite to sulfide. This is one of several activities required for the biosynthesis of L-cysteine from sulfate. The sequence is that of Sulfite reductase [NADPH] hemoprotein beta-component from Nitrosomonas europaea (strain ATCC 19718 / CIP 103999 / KCTC 2705 / NBRC 14298).